The following is a 153-amino-acid chain: MKHARQAKILEIIDKEVIETQEEIADRLKKAGMEVTQATISRDIKELRLIKVMTEDGRYKYAPFNSTDNTVFNRLMTVFSKSYVSSDYANNIVVVKTLPGMAPAAASAIDSMNYPEIVGSIAGDDTVLIVCRSEKIAKEFVEKLSKLAKSDDK.

Belongs to the ArgR family.

Its subcellular location is the cytoplasm. The protein operates within amino-acid biosynthesis; L-arginine biosynthesis [regulation]. Its function is as follows. Regulates arginine biosynthesis genes. In Acetivibrio thermocellus (strain ATCC 27405 / DSM 1237 / JCM 9322 / NBRC 103400 / NCIMB 10682 / NRRL B-4536 / VPI 7372) (Clostridium thermocellum), this protein is Arginine repressor.